We begin with the raw amino-acid sequence, 203 residues long: uncharacterized protein (203 aa).

A disordered region spans residues 117 to 138; sequence SSDPKLKQPSNCLNDQTNNDSA. The segment covering 124 to 138 has biased composition (polar residues); sequence QPSNCLNDQTNNDSA.

It is found in the cytoplasm. The protein resides in the nucleus. This is an uncharacterized protein from Schizosaccharomyces pombe (strain 972 / ATCC 24843) (Fission yeast).